We begin with the raw amino-acid sequence, 290 residues long: Acetylglutamate kinase (290 aa).

Substrate-binding positions include 72–73 (GG), arginine 94, and asparagine 187.

Belongs to the acetylglutamate kinase family. ArgB subfamily.

The protein resides in the plastid. The protein localises to the chloroplast. The catalysed reaction is N-acetyl-L-glutamate + ATP = N-acetyl-L-glutamyl 5-phosphate + ADP. Its pathway is amino-acid biosynthesis; L-arginine biosynthesis; N(2)-acetyl-L-ornithine from L-glutamate: step 2/4. Functionally, catalyzes the ATP-dependent phosphorylation of N-acetyl-L-glutamate. The sequence is that of Acetylglutamate kinase from Cyanidioschyzon merolae (strain NIES-3377 / 10D) (Unicellular red alga).